The sequence spans 1360 residues: KN motif and ankyrin repeat domains 1 (1360 aa).

The interval 30–68 (PYFVETPYGFQLDLDFVKYVDDIQKGNTIKKLNIQKRRK) is KN motif; Interaction with TLN1. The Important for binding to TLN1 motif lies at 41-44 (LDLD). Residues 43-52 (LDFVKYVDDI) carry the Nuclear export signal 1 (NES 1) motif. The short motif at 65–68 (KRRK) is the Nuclear localization signal 1 (NLS 1) element. The segment at 66 to 103 (RRKPSVPCPEVRAIPGHQGVWTSTESLSSSNSDDSKQC) is disordered. Positions 88-103 (STESLSSSNSDDSKQC) are enriched in low complexity. A Nuclear export signal 2 (NES 2) motif is present at residues 125 to 134 (LETSPTFAVS). S186 is subject to Phosphoserine. The disordered stretch occupies residues 221 to 253 (DYNSYVPAAPTTSSMGSSVRHSPLSSGISTPVT). A compositionally biased stretch (polar residues) spans 230-253 (PTTSSMGSSVRHSPLSSGISTPVT). The tract at residues 244–339 (LSSGISTPVT…SQLELLARAR (96 aa)) is interaction with PPFIBP1. A coiled-coil region spans residues 260–311 (LQHIREQMAIALKRLKELEEQVRTIPVLQVKISVLQEEKRQLASQLKSQRAS). The residue at position 325 (S325) is a Phosphoserine. 2 coiled-coil regions span residues 367 to 394 (FRQL…ELRE) and 453 to 487 (ITEA…TTHD). Residues 618–627 (LTLLKTNLNL) carry the Nuclear export signal 3 (NES 3) motif. Disordered regions lie at residues 929–954 (SQPE…MQGS) and 983–1053 (IMKK…DTRG). 2 stretches are compositionally biased toward basic and acidic residues: residues 938 to 947 (AEGKHSRGHE) and 985 to 995 (KKSDGNKDSNG). Positions 985-998 (KKSDGNKDSNGAKK) match the Nuclear localization signal 2 (NLS 2) motif. Low complexity predominate over residues 1010–1025 (ETTSSDESSSDGSSSS). Residues 1026 to 1047 (ESDDECDTIGYPPEEEEEEEEK) show a composition bias toward acidic residues. The segment at 1081-1360 (EPEKEEIRER…PGPTHRGSFD (280 aa)) is interaction with KIF21A. The ANK 0; degenerate repeat unit spans residues 1117-1154 (KDMRICLNTLQHDWFRVSSQKSAVPAMVGDYIAAFEAV). ANK repeat units lie at residues 1169–1199 (NGNT…NVDH), 1203–1236 (AGYT…DVNA), 1241–1270 (AGQT…DVNI), 1274–1306 (EGST…HLED), and 1308–1337 (DGST…FSKA). The segment at 1337 to 1360 (AQSPSTPRLGRKTSPGPTHRGSFD) is disordered.

In terms of assembly, part of a cortical microtubule stabilization complex (CMSC) composed of KANK1, PPFIA1, PPFIBP1, ERC1/ELKS, PHLDB2/LL5beta, CLASPs, KIF21A and possibly additional interactors; within CMSCs KANK1 and PHLDB2/LL5beta appear to be the core components for targeting of microtubule-binding proteins KIF21A and CLASPs, whereas PPFIA1, PPFIBP1 and ERC1/ELKS serve as scaffolds for protein clustering. Interacts (via KN motif) with TLN1 (via R7 domain); this mediates CMSC clustering around focal adhesions. Interacts (via CC1 domain, residues 244-339) with PPFIBP1. Interacts (via ANK repeats 1-5) with KIF21A (via residues 1142-1169). Interacts with YWHAQ; the interaction requires KANK1 phosphorylation at Ser-325 and is enhanced by growth factor stimulation. Interacts with YWHAB, YWHAG, YWHAE, YWHAH, YWHAZ and SFN; the interaction requires KANK1 phosphorylation at Ser-325. Interacts with ARFGEF1; however, colocalization cannot be experimentally confirmed. Interacts with BAIAP2. Interacts with CTNNB1. Interacts (via coiled coil domain) with DAAM1 (via coiled coil domain).

It is found in the cytoplasm. The protein localises to the cell cortex. It localises to the cell projection. The protein resides in the ruffle membrane. Its subcellular location is the nucleus. Adapter protein that links structural and signaling protein complexes positioned to guide microtubule and actin cytoskeleton dynamics during cell morphogenesis. At focal adhesions (FAs) rims, organizes cortical microtubule stabilizing complexes (CMSCs) and directly interacts with major FA component TLN1, forming macromolecular assemblies positioned to control microtubule-actin crosstalk at the cell edge. Recruits KIF21A in CMSCs at axonal growth cones and regulates axon guidance by suppressing microtubule growth without inducing microtubule disassembly once it reaches the cell cortex. Interacts with ARFGEF1 and participates in establishing microtubule-organizing center (MTOC) orientation and directed cell movement in wound healing. Regulates actin stress fiber formation and cell migration by inhibiting RHOA activation in response to growth factors; this function involves phosphorylation through PI3K/Akt signaling and may depend on the competitive interaction with 14-3-3 adapter proteins to sequester them from active complexes. Inhibits the formation of lamellipodia but not of filopodia; this function may depend on the competitive interaction with BAIAP2 to block its association with activated RAC1. Inhibits fibronectin-mediated cell spreading; this function is partially mediated by BAIAP2. In the nucleus, is involved in beta-catenin-dependent activation of transcription. During cell division, may regulate DAAM1-dependent RHOA activation that signals centrosome maturation and chromosomal segregation. May also be involved in contractile ring formation during cytokinesis. Potential tumor suppressor for renal cell carcinoma. The chain is KN motif and ankyrin repeat domains 1 from Mus musculus (Mouse).